Consider the following 489-residue polypeptide: Corticosteroid-binding protein (489 aa).

This sequence to yeast FMS1.

In terms of biological role, may be a flavoprotein with enzymatic activity. The sequence is that of Corticosteroid-binding protein (CBP1) from Candida albicans (strain SC5314 / ATCC MYA-2876) (Yeast).